The sequence spans 54 residues: Conotoxin vc5a (54 aa).

An N-terminal signal peptide occupies residues 1-14 (VILLLITSTPSVDA). A propeptide spanning residues 15–42 (RLKAKDNMPLASFHDNAKRTLQTRLINT) is cleaved from the precursor. Pro49 carries the post-translational modification 4-hydroxyproline. At Ile53 the chain carries Isoleucine amide.

It belongs to the conotoxin T superfamily. Contains 2 disulfide bonds that can be either 'C1-C3, C2-C4' or 'C1-C4, C2-C3', since these disulfide connectivities have been observed for conotoxins with cysteine framework V (for examples, see AC P0DQQ7 and AC P81755). Expressed by the venom duct.

The protein localises to the secreted. The sequence is that of Conotoxin vc5a from Conus victoriae (Queen Victoria cone).